Here is a 443-residue protein sequence, read N- to C-terminus: Threonine/serine transporter TdcC (443 aa).

The next 11 membrane-spanning stretches (helical) occupy residues 22–42 (TTWTLGLFGTAIGAGVLFFPI), 44–64 (AGFGGLIPILLMLVLAYPIAF), 97–117 (GVVITFLYFFAICPLLWIYGV), 140–160 (FVALFLLLLMAFVIWFGKDLM), 163–183 (VMSYLVWPFIASLVLISLSLI), 207–227 (ILVTVWLGISIMVFSFNFSPI), 259–279 (ASMLMVAVVMFFAFSCLFTLS), 319–339 (ASIIALVAIFKSFFGHYLGTL), 366–386 (ISMIFIMGSTWVVAYANPNIL), 389–409 (IEAMGAPIIASLLCLLPMYAI), and 423–443 (DNVFVTLIGLLTILNIVYKLF).

The protein belongs to the amino acid/polyamine transporter 2 family. SdaC/TdcC subfamily.

It is found in the cell inner membrane. The catalysed reaction is L-threonine(in) + H(+)(in) = L-threonine(out) + H(+)(out). It carries out the reaction L-serine(in) + H(+)(in) = L-serine(out) + H(+)(out). Its function is as follows. Involved in the import of threonine and serine into the cell, with the concomitant import of a proton (symport system). The sequence is that of Threonine/serine transporter TdcC from Salmonella paratyphi B (strain ATCC BAA-1250 / SPB7).